A 340-amino-acid chain; its full sequence is Proline-rich transmembrane protein 2 (340 aa).

The disordered stretch occupies residues 1–261 (MAASSSEISE…AGPGVEGGEG (261 aa)). Residues 1 to 268 (MAASSSEISE…GEGTQKPRDY (268 aa)) lie on the Cytoplasmic side of the membrane. Over residues 9-18 (SEMKGVEESP) the composition is skewed to basic and acidic residues. A Phosphoserine modification is found at serine 28. Threonine 74 is modified (phosphothreonine). 2 stretches are compositionally biased toward pro residues: residues 131-155 (PPEPAPEPAPQPDPRPDSQPTPKPA) and 197-207 (APEPHSPPSKK). Residue serine 238 is modified to Phosphoserine. Arginine 240 is modified (omega-N-methylarginine). Residues serine 248 and serine 249 each carry the phosphoserine modification. The helical intramembrane region spans 269–289 (IILAILSCFCPMWPVNIVAFA). Residues 290-317 (YAVMSRNSLQQGDVDGAQRLGRVAKLLS) lie on the Cytoplasmic side of the membrane. Residues 318-338 (IVALVGGVLIIIASCVINLGV) traverse the membrane as a helical segment. Residues 339–340 (YK) are Extracellular-facing.

The protein belongs to the CD225/Dispanin family. Component of the outer core of AMPAR complex. AMPAR complex consists of an inner core made of 4 pore-forming GluA/GRIA proteins (GRIA1, GRIA2, GRIA3 and GRIA4) and 4 major auxiliary subunits arranged in a twofold symmetry. One of the two pairs of distinct binding sites is occupied either by CNIH2, CNIH3 or CACNG2, CACNG3. The other harbors CACNG2, CACNG3, CACNG4, CACNG8 or GSG1L. This inner core of AMPAR complex is complemented by outer core constituents binding directly to the GluA/GRIA proteins at sites distinct from the interaction sites of the inner core constituents. Outer core constituents include at least PRRT1, PRRT2, CKAMP44/SHISA9, FRRS1L and NRN1. The proteins of the inner and outer core serve as a platform for other, more peripherally associated AMPAR constituents. Alone or in combination, these auxiliary subunits control the gating and pharmacology of the AMPAR complex and profoundly impact their biogenesis and protein processing. Interacts with intersectin 1/ITSN1. Interacts with SNARE complex components, including SNAP25, STX1A, SYT1 and SYT2; this interaction may inhibit SNARE complex formation.

It localises to the cell membrane. Its subcellular location is the presynaptic cell membrane. It is found in the synapse. The protein localises to the cell projection. The protein resides in the axon. It localises to the cytoplasmic vesicle. Its subcellular location is the secretory vesicle. It is found in the synaptic vesicle membrane. The protein localises to the postsynaptic density membrane. The protein resides in the dendritic spine. As a component of the outer core of AMPAR complex, may be involved in synaptic transmission in the central nervous system. In hippocampal neurons, in presynaptic terminals, plays an important role in the final steps of neurotransmitter release, possibly by regulating Ca(2+)-sensing. In the cerebellum, may inhibit SNARE complex formation and down-regulate short-term facilitation. This chain is Proline-rich transmembrane protein 2 (PRRT2), found in Homo sapiens (Human).